A 225-amino-acid chain; its full sequence is ATP-dependent dethiobiotin synthetase BioD 1 (225 aa).

2 residues coordinate Mg(2+): Glu-13 and Thr-17. ATP is bound at residue 13–18 (EVGKTV). The active site involves Lys-38. Ser-42 contacts substrate. The Mg(2+) site is built by Asp-55 and Glu-116. Residues Asp-55, 116-119 (EGAG), and 176-177 (ND) contribute to the ATP site. Tyr-188 serves as a coordination point for substrate. ATP-binding positions include 205-207 (PWL) and Glu-212.

The protein belongs to the dethiobiotin synthetase family. As to quaternary structure, homodimer. Requires Mg(2+) as cofactor.

It is found in the cytoplasm. The catalysed reaction is (7R,8S)-7,8-diammoniononanoate + CO2 + ATP = (4R,5S)-dethiobiotin + ADP + phosphate + 3 H(+). The protein operates within cofactor biosynthesis; biotin biosynthesis; biotin from 7,8-diaminononanoate: step 1/2. In terms of biological role, catalyzes a mechanistically unusual reaction, the ATP-dependent insertion of CO2 between the N7 and N8 nitrogen atoms of 7,8-diaminopelargonic acid (DAPA, also called 7,8-diammoniononanoate) to form a ureido ring. Only CTP can partially replace ATP while diaminobiotin is only 37% as effective as 7,8-diaminopelargonic acid. In another study both CTP and GTP (but not ITP, TTP or UTP) can partially replace ATP. The sequence is that of ATP-dependent dethiobiotin synthetase BioD 1 from Escherichia coli (strain K12).